A 38-amino-acid chain; its full sequence is Small ribosomal subunit protein uS12c (38 aa).

The tract at residues 1–26 (MPTIQQLIRNARQPIENRKKSPALRG) is disordered.

The protein belongs to the universal ribosomal protein uS12 family. As to quaternary structure, part of the 30S ribosomal subunit.

Its subcellular location is the plastid. It localises to the chloroplast. In terms of biological role, with S4 and S5 plays an important role in translational accuracy. Located at the interface of the 30S and 50S subunits. This Pinus contorta (Shore pine) protein is Small ribosomal subunit protein uS12c (rps12).